The primary structure comprises 345 residues: Phosphoribosylformylglycinamidine cyclo-ligase (345 aa).

It belongs to the AIR synthase family.

It is found in the cytoplasm. It carries out the reaction 2-formamido-N(1)-(5-O-phospho-beta-D-ribosyl)acetamidine + ATP = 5-amino-1-(5-phospho-beta-D-ribosyl)imidazole + ADP + phosphate + H(+). It functions in the pathway purine metabolism; IMP biosynthesis via de novo pathway; 5-amino-1-(5-phospho-D-ribosyl)imidazole from N(2)-formyl-N(1)-(5-phospho-D-ribosyl)glycinamide: step 2/2. The polypeptide is Phosphoribosylformylglycinamidine cyclo-ligase (Pectobacterium atrosepticum (strain SCRI 1043 / ATCC BAA-672) (Erwinia carotovora subsp. atroseptica)).